Reading from the N-terminus, the 270-residue chain is Glucosamine-6-phosphate deaminase (270 aa).

Catalysis depends on D72, which acts as the Proton acceptor; for enolization step. The active-site For ring-opening step is D141. The Proton acceptor; for ring-opening step role is filled by H143. E148 acts as the For ring-opening step in catalysis.

This sequence belongs to the glucosamine/galactosamine-6-phosphate isomerase family. NagB subfamily.

It catalyses the reaction alpha-D-glucosamine 6-phosphate + H2O = beta-D-fructose 6-phosphate + NH4(+). It participates in amino-sugar metabolism; N-acetylneuraminate degradation; D-fructose 6-phosphate from N-acetylneuraminate: step 5/5. Its activity is regulated as follows. Allosterically activated by N-acetylglucosamine 6-phosphate (GlcNAc6P). Functionally, catalyzes the reversible isomerization-deamination of glucosamine 6-phosphate (GlcN6P) to form fructose 6-phosphate (Fru6P) and ammonium ion. This chain is Glucosamine-6-phosphate deaminase, found in Treponema denticola (strain ATCC 35405 / DSM 14222 / CIP 103919 / JCM 8153 / KCTC 15104).